A 323-amino-acid polypeptide reads, in one-letter code: HPr kinase/phosphorylase (323 aa).

Residues His146 and Lys167 contribute to the active site. An ATP-binding site is contributed by 161-168 (GESGLGKS). Mg(2+) is bound at residue Ser168. Asp185 acts as the Proton acceptor; for phosphorylation activity. Proton donor; for dephosphorylation activity in catalysis. The tract at residues 209–218 (LEVRGLGLLD) is important for the catalytic mechanism of both phosphorylation and dephosphorylation. Position 210 (Glu210) interacts with Mg(2+). Arg250 is an active-site residue. An important for the catalytic mechanism of dephosphorylation region spans residues 271-276 (QVAAGR).

It belongs to the HPrK/P family. Homohexamer. The cofactor is Mg(2+).

The enzyme catalyses [HPr protein]-L-serine + ATP = [HPr protein]-O-phospho-L-serine + ADP + H(+). It carries out the reaction [HPr protein]-O-phospho-L-serine + phosphate + H(+) = [HPr protein]-L-serine + diphosphate. Its function is as follows. Catalyzes the ATP- as well as the pyrophosphate-dependent phosphorylation of a specific serine residue in HPr, a phosphocarrier protein of the phosphoenolpyruvate-dependent sugar phosphotransferase system (PTS). HprK/P also catalyzes the pyrophosphate-producing, inorganic phosphate-dependent dephosphorylation (phosphorolysis) of seryl-phosphorylated HPr (P-Ser-HPr). The polypeptide is HPr kinase/phosphorylase (Cupriavidus pinatubonensis (strain JMP 134 / LMG 1197) (Cupriavidus necator (strain JMP 134))).